A 312-amino-acid chain; its full sequence is MDFYNICCKYLKEIELTREDYSADRNSPQYNLFCSHHINPKFNKGGDEPENLVLLHYFEHAYVHLFRWLITDNPRDLGGFTSAMNAKERRELQIEKRRENPPKLTLPPLPPPAEERKKPAKTAKAIRAGKAVGSKYQLQSLKRANPFTMFMANLVLKFINNNGIEVIHKPSDNIKDVSVNSASAIGRALNNVYPTETLTNSPDGISKLLKGTNKIVQNWRIDSLFIDDFEYEITQEVLLKYQDLFETLTTYFSENQELSILELTKSMADIRNSNPKEIALIQKMFTFIKKWSFLIKSLSEGKADDEIDLPTD.

The disordered stretch occupies residues 95 to 119 (EKRRENPPKLTLPPLPPPAEERKKP).

It localises to the plastid. Its subcellular location is the chloroplast. This is an uncharacterized protein from Chlamydomonas moewusii (Chlamydomonas eugametos).